Reading from the N-terminus, the 544-residue chain is Dynein intermediate chain 1 (544 aa).

WD repeat units follow at residues 241–281 (KARS…YPVS), 289–330 (GHLE…RPSE), 342–387 (SQCI…QPSN), 402–441 (VMTS…NQHE), 461–501 (THKA…EAPV), and 506–544 (PDGK…NLAN).

Belongs to the dynein intermediate chain family.

It is found in the cytoplasm. In terms of biological role, has a role in meiotic nuclear divsion where it promotes the movement of 'horsetails'. The sequence is that of Dynein intermediate chain 1 (dic1) from Schizosaccharomyces pombe (strain 972 / ATCC 24843) (Fission yeast).